Reading from the N-terminus, the 449-residue chain is Glucose-6-phosphate isomerase (449 aa).

E291 serves as the catalytic Proton donor. Active-site residues include H312 and K426.

Belongs to the GPI family.

The protein localises to the cytoplasm. The catalysed reaction is alpha-D-glucose 6-phosphate = beta-D-fructose 6-phosphate. It participates in carbohydrate biosynthesis; gluconeogenesis. It functions in the pathway carbohydrate degradation; glycolysis; D-glyceraldehyde 3-phosphate and glycerone phosphate from D-glucose: step 2/4. Its function is as follows. Catalyzes the reversible isomerization of glucose-6-phosphate to fructose-6-phosphate. The protein is Glucose-6-phosphate isomerase of Streptococcus equi subsp. zooepidemicus (strain MGCS10565).